The sequence spans 204 residues: N-(5'-phosphoribosyl)anthranilate isomerase (204 aa).

It belongs to the TrpF family.

It carries out the reaction N-(5-phospho-beta-D-ribosyl)anthranilate = 1-(2-carboxyphenylamino)-1-deoxy-D-ribulose 5-phosphate. It participates in amino-acid biosynthesis; L-tryptophan biosynthesis; L-tryptophan from chorismate: step 3/5. In Pseudomonas fluorescens (strain Pf0-1), this protein is N-(5'-phosphoribosyl)anthranilate isomerase.